The sequence spans 441 residues: Protein kinase C and casein kinase substrate in neurons protein 1 (441 aa).

Residues Ser-2 and Ser-76 each carry the phosphoserine modification. Residues 10 to 280 enclose the F-BAR domain; it reads EEITDSFWEV…AIRGADAQED (271 aa). A coiled-coil region spans residues 23 to 272; sequence KRTVKRIDDG…HVYRELEQAI (250 aa). Thr-181 is subject to Phosphothreonine. A disordered region spans residues 297–380; sequence PQFEEWNPDL…ANGGANPFED (84 aa). Over residues 311–321 the composition is skewed to basic and acidic residues; sequence AKKEKQPKKAE. The segment covering 324 to 355 has biased composition (polar residues); the sequence is TLSNATGAVESTSQAGDRGSVSSYDRGQTYAT. Ser-343, Ser-345, Ser-346, Ser-358, and Ser-362 each carry phosphoserine. The 60-residue stretch at 382 to 441 folds into the SH3 domain; it reads AKGVRVRALYDYDGQEQDELSFKAGDELTKLGEEDEQGWCRGRLDSGQLGLYPANYVEAI. Tyr-391 bears the Phosphotyrosine mark. 2 positions are modified to phosphoserine: Ser-402 and Ser-427.

This sequence belongs to the PACSIN family. Homodimer. May form heterooligomers with other PACSINs. Interacts with both COBL and DBNL. Identified in a complex composed of COBL, PACSIN1 and WASL. Interacts with EHD3. Interacts (via SH3 domain) with SYNJ1 and WASL. Interacts (via SH3 domain) with DNM1; the interaction is reduced by DNM1 phosphorylation. Interacts with DNM2 and DNM3. Interacts with MAPT. Interacts with EHD1. Interacts with TRPV4. Post-translationally, phosphorylated by casein kinase 2 (CK2) and protein kinase C (PKC). In terms of tissue distribution, highly expressed in brain. Detected in hippocampus and dorsal root ganglion neurons. Detected in rod photoreceptor terminals in the outer plexiform layer of the retina (at protein level). In CNS neurons, high levels in the pyramidal cells of the hippocampus, Purkinje cells of the cerebellum and large neurons of the cortex and brain stem.

It localises to the cytoplasm. The protein localises to the cell projection. The protein resides in the synapse. Its subcellular location is the synaptosome. It is found in the ruffle membrane. It localises to the membrane. The protein localises to the cytoplasmic vesicle membrane. The protein resides in the cytosol. Its subcellular location is the cell membrane. In terms of biological role, binds to membranes via its F-BAR domain and mediates membrane tubulation. Plays a role in the reorganization of the microtubule cytoskeleton via its interaction with MAPT; this decreases microtubule stability and inhibits MAPT-induced microtubule polymerization. Plays a role in cellular transport processes by recruiting DNM1, DNM2 and DNM3 to membranes. Plays a role in the reorganization of the actin cytoskeleton and in neuron morphogenesis via its interaction with COBL and WASL, and by recruiting COBL to the cell cortex. Plays a role in the regulation of neurite formation, neurite branching and the regulation of neurite length. Required for normal synaptic vesicle endocytosis; this process retrieves previously released neurotransmitters to accommodate multiple cycles of neurotransmission. Required for normal excitatory and inhibitory synaptic transmission. The chain is Protein kinase C and casein kinase substrate in neurons protein 1 (Pacsin1) from Mus musculus (Mouse).